The sequence spans 292 residues: Acetyl-coenzyme A carboxylase carboxyl transferase subunit beta (292 aa).

The 264-residue stretch at 29–292 (LWVKCSECGQ…HGVKELVQTN (264 aa)) folds into the CoA carboxyltransferase N-terminal domain. The Zn(2+) site is built by cysteine 33, cysteine 36, cysteine 52, and cysteine 55. Residues 33–55 (CSECGQVAYRKDLISNFNVCSNC) form a C4-type zinc finger.

Belongs to the AccD/PCCB family. Acetyl-CoA carboxylase is a heterohexamer composed of biotin carboxyl carrier protein (AccB), biotin carboxylase (AccC) and two subunits each of ACCase subunit alpha (AccA) and ACCase subunit beta (AccD). It depends on Zn(2+) as a cofactor.

It localises to the cytoplasm. The enzyme catalyses N(6)-carboxybiotinyl-L-lysyl-[protein] + acetyl-CoA = N(6)-biotinyl-L-lysyl-[protein] + malonyl-CoA. It participates in lipid metabolism; malonyl-CoA biosynthesis; malonyl-CoA from acetyl-CoA: step 1/1. Component of the acetyl coenzyme A carboxylase (ACC) complex. Biotin carboxylase (BC) catalyzes the carboxylation of biotin on its carrier protein (BCCP) and then the CO(2) group is transferred by the transcarboxylase to acetyl-CoA to form malonyl-CoA. The polypeptide is Acetyl-coenzyme A carboxylase carboxyl transferase subunit beta (Prochlorococcus marinus subsp. pastoris (strain CCMP1986 / NIES-2087 / MED4)).